We begin with the raw amino-acid sequence, 113 residues long: MRCKTLTAAAAVLLMLTAGCSTLERVVYRPDINQGNYLTANDVSKIRVGMTQQQVAYALGTPLMSDPFGTNTWFYVFRQQPGHEGVTQQTLTLTFNSSGVLTNIDNKPALSGN.

A signal peptide spans 1–19; that stretch reads MRCKTLTAAAAVLLMLTAG. C20 carries N-palmitoyl cysteine lipidation. The S-diacylglycerol cysteine moiety is linked to residue C20.

This sequence belongs to the BamE family. In terms of assembly, part of the Bam complex, which is composed of the outer membrane protein BamA, and four lipoproteins BamB, BamC, BamD and BamE.

It localises to the cell outer membrane. In terms of biological role, part of the outer membrane protein assembly complex, which is involved in assembly and insertion of beta-barrel proteins into the outer membrane. This Escherichia coli O6:H1 (strain CFT073 / ATCC 700928 / UPEC) protein is Outer membrane protein assembly factor BamE.